Here is a 175-residue protein sequence, read N- to C-terminus: Endoribonuclease YbeY (175 aa).

His121, His125, and His131 together coordinate Zn(2+). The segment at 154–175 (PDPYSPAQQESQAQPENTELNP) is disordered. Over residues 159–175 (PAQQESQAQPENTELNP) the composition is skewed to polar residues.

Belongs to the endoribonuclease YbeY family. Zn(2+) serves as cofactor.

It localises to the cytoplasm. Single strand-specific metallo-endoribonuclease involved in late-stage 70S ribosome quality control and in maturation of the 3' terminus of the 16S rRNA. This chain is Endoribonuclease YbeY, found in Alcanivorax borkumensis (strain ATCC 700651 / DSM 11573 / NCIMB 13689 / SK2).